The chain runs to 99 residues: METLTFEFPAGAPARGRALAGCVGSGDLEVLLEPAAGGALSIEVVTSVNGSGPRWQQLFARVFAAATAPAAAIRIHDFGATPGVVRLRLEQALEEAGHD.

O-(phosphoribosyl dephospho-coenzyme A)serine is present on Ser25.

The protein belongs to the MdcC family. Covalently binds the prosthetic group of malonate decarboxylase.

Its subcellular location is the cytoplasm. Subunit of malonate decarboxylase, it is an acyl carrier protein to which acetyl and malonyl thioester residues are bound via a 2'-(5''-phosphoribosyl)-3'-dephospho-CoA prosthetic group and turn over during the catalytic mechanism. This chain is Malonate decarboxylase acyl carrier protein, found in Pseudomonas paraeruginosa (strain DSM 24068 / PA7) (Pseudomonas aeruginosa (strain PA7)).